Reading from the N-terminus, the 618-residue chain is Syncytin-B (618 aa).

Positions 1–17 (MTGFWVLCFVLFPSSLS) are cleaved as a signal peptide. Topologically, residues 18–545 (YPESWMPLVN…SWGQWPDLGR (528 aa)) are extracellular. Asn27 carries N-linked (GlcNAc...) asparagine glycosylation. Residues 44 to 47 (CWVC) carry the CXXC motif. Cystine bridges form between Cys44/Cys47, Cys44/Cys507, and Cys499/Cys506. Asn184, Asn274, and Asn357 each carry an N-linked (GlcNAc...) asparagine glycan. Positions 422-442 (LFPFLAGLGISSALGTGIAGL) are fusion peptide. The segment at 482 to 498 (LQNRRALDLITAEKGGT) is immunosuppression. Residues 499–507 (CLFLQEECC) carry the CX6CC motif. A helical transmembrane segment spans residues 546–566 (WLPWLTPFLGPLLFLFFLLTF). Residues 567–618 (GSCLLNCLTRFVSQRLGSFVQDTAKRHVDSILQNFQYKKLPQDSPDEDTIPT) are Cytoplasmic-facing.

Belongs to the gamma type-C retroviral envelope protein family. The mature protein consists of a trimer of SU-TM heterodimers. The SU-TM heterodimers are attached by a labile interchain disulfide bond. Post-translationally, synthesized as an inactive precursor that is heavily N-glycosylated and processed likely by furin in the Golgi to yield the mature SU and TM proteins. The cleavage site between SU and TM requires the minimal sequence [KR]-X-[KR]-R. In terms of processing, the CXXC motif is highly conserved across a broad range of retroviral envelope proteins. It is thought to participate in the formation of a labile disulfide bond possibly with the CX6CC motif present in the transmembrane protein. Isomerization of the intersubunit disulfide bond to an SU intrachain disulfide bond is thought to occur upon receptor recognition in order to allow membrane fusion. In terms of tissue distribution, highly expressed in placenta where it localizes to syncytiotrophoblasts of the labyrinthine zona. Specifically localizes to syncytiotrophoblast layer II (SynT-II). Also detected at very low levels in ovary.

It is found in the cell membrane. Functionally, this endogenous retroviral envelope protein has retained its original fusogenic properties. Together with Syna, participates in trophoblast fusion and the formation of a syncytium during placenta morphogenesis. Synb is specifically involved in formation of syncytiotrophoblast layer II (SynT-II). Promotes myoblast fusion, and may play a role in regeneration of damaged muscle tissue in males. May have immunosuppressive activity. The polypeptide is Syncytin-B (Mus musculus (Mouse)).